The sequence spans 424 residues: MFLLPRFCLVCSIIGTFGFENPPTNVVSHFNDDWFLFGDSRSDCNHVVNTNPRNYSYMDLNPALCDSGKISSKAGNSIFRSFHFTDFYNYTGEGQQIIFYEGVNFTPYHAFKCTSAGNNDIWMQNKGLFYTQVYKKMAVYRSLTLVNVPYVYNGSAQPTAFCKSGSLILNNPAYIAREANVGDYYYKSEADFSLSGCDEYIVPLCIFNGKFLSNTKYYDDSQYYFNKDTGVIYGLNSTETITTGFDFNCHYLVLPSGNYLAISNELLLTVPTKAICLNKRKVFTPVQVVDSRWNNARQSDNMTAVACQLPYCYFRNSTSNYVGIHDVNHGDAGFTSILSGLLYDSPCFSQQGVFRYDNVSTVWPLFPFGNCPTAASIISSDLPICVYDPLPIILLGILLGVAVIVIVVLLLYFMVDNGIRQHYA.

Positions 1–16 (MFLLPRFCLVCSIIGT) are cleaved as a signal peptide. An esterase domain 1 region spans residues 7 to 127 (FCLVCSIIGT…NNDIWMQNKG (121 aa)). The Virion surface segment spans residues 17–392 (FGFENPPTNV…PICVYDPLPI (376 aa)). Residue serine 40 is the Nucleophile of the active site. A disulfide bridge connects residues cysteine 44 and cysteine 65. Asparagine 54, asparagine 89, asparagine 153, asparagine 236, and asparagine 301 each carry an N-linked (GlcNAc...) asparagine; by host glycan. Intrachain disulfides connect cysteine 113-cysteine 162, cysteine 197-cysteine 276, and cysteine 205-cysteine 249. Residues 128 to 266 (LFYTQVYKKM…GNYLAISNEL (139 aa)) are receptor binding. Residues 267-379 (LLTVPTKAIC…NCPTAASIIS (113 aa)) form an esterase domain 2 region. Residues cysteine 307 and cysteine 312 are joined by a disulfide bond. Residue asparagine 316 is glycosylated (N-linked (GlcNAc...) asparagine; by host). Active-site charge relay system residues include aspartate 326 and histidine 329. Cysteine 347 and cysteine 371 are disulfide-bonded. Asparagine 358 carries N-linked (GlcNAc...) asparagine; by host glycosylation. A helical membrane pass occupies residues 393–413 (ILLGILLGVAVIVIVVLLLYF). Topologically, residues 414–424 (MVDNGIRQHYA) are intravirion.

It belongs to the influenza type C/coronaviruses hemagglutinin-esterase family. Homodimer; disulfide-linked. Forms a complex with the M protein in the pre-Golgi. Associates then with S-M complex to form a ternary complex S-M-HE. In terms of processing, N-glycosylated in the host RER.

The protein resides in the virion membrane. It is found in the host cell membrane. The enzyme catalyses N-acetyl-9-O-acetylneuraminate + H2O = N-acetylneuraminate + acetate + H(+). It carries out the reaction N-acetyl-4-O-acetylneuraminate + H2O = N-acetylneuraminate + acetate + H(+). In terms of biological role, structural protein that makes short spikes at the surface of the virus. Contains receptor binding and receptor-destroying activities. Mediates de-O-acetylation of N-acetyl-4-O-acetylneuraminic acid, which is probably the receptor determinant recognized by the virus on the surface of erythrocytes and susceptible cells. This receptor-destroying activity is important for virus release as it probably helps preventing self-aggregation and ensures the efficient spread of the progeny virus from cell to cell. May serve as a secondary viral attachment protein for initiating infection, the spike protein being the major one. May become a target for both the humoral and the cellular branches of the immune system. In Sus scrofa (Pig), this protein is Hemagglutinin-esterase.